The primary structure comprises 340 residues: Sterol-4-alpha-carboxylate 3-dehydrogenase erg26, decarboxylating (340 aa).

The active-site Proton acceptor is tyrosine 144. Residue lysine 148 coordinates NAD(+).

Belongs to the 3-beta-HSD family. In terms of assembly, heterotetramer of erg25, erg26, erg27 and erg28. Erg28 acts as a scaffold to tether erg27 and other 4,4-demethylation-related enzymes, forming a demethylation enzyme complex, in the endoplasmic reticulum.

The protein resides in the endoplasmic reticulum membrane. It catalyses the reaction 4beta-methylzymosterol-4alpha-carboxylate + NADP(+) = 3-dehydro-4-methylzymosterol + CO2 + NADPH. The protein operates within steroid biosynthesis; zymosterol biosynthesis; zymosterol from lanosterol: step 4/6. Its pathway is steroid metabolism; ergosterol biosynthesis. Functionally, sterol-4-alpha-carboxylate 3-dehydrogenase; part of the third module of ergosterol biosynthesis pathway that includes by the late steps of the pathway. Erg26 is a catalytic component of the C-4 demethylation complex that catalyzes the oxidative decarboxylation that results in a reduction of the 3-beta-hydroxy group at the C-3 carbon to an oxo group. The third module or late pathway involves the ergosterol synthesis itself through consecutive reactions that mainly occur in the endoplasmic reticulum (ER) membrane. Firstly, the squalene synthase erg9 catalyzes the condensation of 2 farnesyl pyrophosphate moieties to form squalene, which is the precursor of all steroids. Secondly, squalene is converted into lanosterol by the consecutive action of the squalene epoxidase erg1 and the lanosterol synthase erg7. The lanosterol 14-alpha-demethylase erg11/cyp1 catalyzes C14-demethylation of lanosterol to produce 4,4'-dimethyl cholesta-8,14,24-triene-3-beta-ol. In the next steps, a complex process involving various demethylation, reduction and desaturation reactions catalyzed by the C-14 reductase erg24 and the C-4 demethylation complex erg25-erg26-erg27 leads to the production of zymosterol. Erg28 likely functions in the C-4 demethylation complex reaction by tethering erg26 and Erg27 to the endoplasmic reticulum or to facilitate interaction between these proteins. Then, the sterol 24-C-methyltransferase erg6 catalyzes the methyl transfer from S-adenosyl-methionine to the C-24 of zymosterol to form fecosterol. The C-8 sterol isomerase erg2 catalyzes the reaction which results in unsaturation at C-7 in the B ring of sterols and thus converts fecosterol to episterol. The sterol-C5-desaturases erg31 and erg32 then catalyze the introduction of a C-5 double bond in the B ring to produce 5-dehydroepisterol. The C-22 sterol desaturase erg5 further converts 5-dehydroepisterol into ergosta-5,7,22,24(28)-tetraen-3beta-ol by forming the C-22(23) double bond in the sterol side chain. Finally, ergosta-5,7,22,24(28)-tetraen-3beta-ol is substrate of the C-24(28) sterol reductase erg4 to produce ergosterol. In the genus Schizosaccharomyces, a second route exists between lanosterol and fecosterol, via the methylation of lanosterol to eburicol by erg6, followed by C14-demethylation by erg11/cyp1 and C4-demethylation by the demethylation complex erg25-erg26-erg27. The protein is Sterol-4-alpha-carboxylate 3-dehydrogenase erg26, decarboxylating of Schizosaccharomyces pombe (strain 972 / ATCC 24843) (Fission yeast).